The sequence spans 49 residues: Small ribosomal subunit protein uS14B (49 aa).

This sequence belongs to the universal ribosomal protein uS14 family. Zinc-binding uS14 subfamily. Part of the 30S ribosomal subunit.

Its function is as follows. Binds 16S rRNA, required for the assembly of 30S particles. The chain is Small ribosomal subunit protein uS14B from Natronomonas pharaonis (strain ATCC 35678 / DSM 2160 / CIP 103997 / JCM 8858 / NBRC 14720 / NCIMB 2260 / Gabara) (Halobacterium pharaonis).